The chain runs to 324 residues: Probable pectinesterase A (324 aa).

The first 19 residues, 1 to 19 (MHGSLLKLALLSFSLGSSA), serve as a signal peptide directing secretion. Q142 provides a ligand contact to substrate. D165 functions as the Proton donor in the catalytic mechanism. The Nucleophile role is filled by D186. R246 and W248 together coordinate substrate. A glycan (N-linked (GlcNAc...) asparagine) is linked at N285.

Belongs to the pectinesterase family.

Its subcellular location is the secreted. It catalyses the reaction [(1-&gt;4)-alpha-D-galacturonosyl methyl ester](n) + n H2O = [(1-&gt;4)-alpha-D-galacturonosyl](n) + n methanol + n H(+). Its pathway is glycan metabolism; pectin degradation; 2-dehydro-3-deoxy-D-gluconate from pectin: step 1/5. In terms of biological role, involved in maceration and soft-rotting of plant tissue. In Aspergillus oryzae (strain ATCC 42149 / RIB 40) (Yellow koji mold), this protein is Probable pectinesterase A (pmeA).